The chain runs to 51 residues: Insulin (51 aa).

3 disulfide bridges follow: cysteine 7/cysteine 37, cysteine 19/cysteine 50, and cysteine 36/cysteine 41.

It belongs to the insulin family. As to quaternary structure, heterodimer of a B chain and an A chain linked by two disulfide bonds.

Its subcellular location is the secreted. Its function is as follows. Insulin decreases blood glucose concentration. It increases cell permeability to monosaccharides, amino acids and fatty acids. It accelerates glycolysis, the pentose phosphate cycle, and glycogen synthesis in liver. This is Insulin (INS) from Elephas maximus (Indian elephant).